Reading from the N-terminus, the 554-residue chain is Phenylalanine--tRNA ligase beta subunit (554 aa).

The B5 domain occupies 274 to 351 (LTPDSAEITI…INYGYENFNG (78 aa)). Mg(2+) contacts are provided by Asp329, Asp335, and Asp339.

The protein belongs to the phenylalanyl-tRNA synthetase beta subunit family. Type 2 subfamily. In terms of assembly, tetramer of two alpha and two beta subunits. It depends on Mg(2+) as a cofactor.

It localises to the cytoplasm. The enzyme catalyses tRNA(Phe) + L-phenylalanine + ATP = L-phenylalanyl-tRNA(Phe) + AMP + diphosphate + H(+). The chain is Phenylalanine--tRNA ligase beta subunit from Methanococcus aeolicus (strain ATCC BAA-1280 / DSM 17508 / OCM 812 / Nankai-3).